The sequence spans 200 residues: Recombination protein RecR (200 aa).

The C4-type zinc-finger motif lies at 57–72 (CSQCRDFTEEDTCNIC). Positions 81 to 176 (GLLCVVEMPA…KVSRIAHGIP (96 aa)) constitute a Toprim domain.

This sequence belongs to the RecR family.

May play a role in DNA repair. It seems to be involved in an RecBC-independent recombinational process of DNA repair. It may act with RecF and RecO. The chain is Recombination protein RecR from Haemophilus influenzae (strain 86-028NP).